A 685-amino-acid chain; its full sequence is MIDRYKHQQLRIGSVSPQQISAWAKKILPNGETVGEVTKPYTFHYKTNKPEKDGLFCERIFGPIKSGICACGNYRVIGNQKEGPKFCEQCGVEFVDSRIRRYQMGYIRLACPVTHVWYLKRLPSYIANLLDKPLKELEGLVYCDFSFARPIAKKPTFLRLRGSFEYEIQSWKYSIPLFFTTQGFDTFRSREISTGAGAIREQLADLDLRILIDYSVVEWKELGEEGLTGNEWEDRKIGRRKDFLVRRMELAKHFIRTNIEPEWMVLCLLPVLPPELRPIIQIDGGKLMSSDINELYRRVIYRNNTLTDLLTTSRSTPGELVMCQEKLVQEAVDTLLDNGIRGQPMRDGHNKVYKSFSDVIEGKEGRFRETLLGKRVDYSGRSVIVVGPSLSLHRCGLPREIAIELFQTFVIRGLIRQHLAPNIGVAKSKIREKGPIVWEILQEVMRGHPVLLNRAPTLHRLGIQAFQPILVEGRAICLHPLVCKGFNADFDGDQMAVHVPLSLEAQAEARLLMFSHMNLLSPAIGDPISVPTQDMLIGLYVLTSGNRRGICANRYNPWNRKSYQNERIDDNNYKSTREPFFCNSYDAIGAYRQKRINLDSPLWLRWQLEQCVIASREAPIEVHYESSGTYHEIYGHYLIVRSLKKKILCIYIRTTVGHISLYREIEEAIQGFFRAYSYDTQSYGI.

Residues Cys69, Cys71, Cys87, and Cys90 each contribute to the Zn(2+) site. Mg(2+) is bound by residues Asp489, Asp491, and Asp493.

It belongs to the RNA polymerase beta' chain family. RpoC1 subfamily. In plastids the minimal PEP RNA polymerase catalytic core is composed of four subunits: alpha, beta, beta', and beta''. When a (nuclear-encoded) sigma factor is associated with the core the holoenzyme is formed, which can initiate transcription. Mg(2+) is required as a cofactor. Requires Zn(2+) as cofactor.

It localises to the plastid. The protein localises to the chloroplast. It catalyses the reaction RNA(n) + a ribonucleoside 5'-triphosphate = RNA(n+1) + diphosphate. In terms of biological role, DNA-dependent RNA polymerase catalyzes the transcription of DNA into RNA using the four ribonucleoside triphosphates as substrates. This Gossypium hirsutum (Upland cotton) protein is DNA-directed RNA polymerase subunit beta'.